The primary structure comprises 104 residues: ATP synthase subunit c (104 aa).

Transmembrane regions (helical) follow at residues 37–57 and 83–103; these read LLGAGVAIIGVAGAGIGQGAV and AGIAESGAIYALVVAILLIFV.

This sequence belongs to the ATPase C chain family. As to quaternary structure, F-type ATPases have 2 components, F(1) - the catalytic core - and F(0) - the membrane proton channel. F(1) has five subunits: alpha(3), beta(3), gamma(1), delta(1), epsilon(1). F(0) has three main subunits: a(1), b(2) and c(10-14). The alpha and beta chains form an alternating ring which encloses part of the gamma chain. F(1) is attached to F(0) by a central stalk formed by the gamma and epsilon chains, while a peripheral stalk is formed by the delta and b chains.

The protein resides in the cell membrane. In terms of biological role, f(1)F(0) ATP synthase produces ATP from ADP in the presence of a proton or sodium gradient. F-type ATPases consist of two structural domains, F(1) containing the extramembraneous catalytic core and F(0) containing the membrane proton channel, linked together by a central stalk and a peripheral stalk. During catalysis, ATP synthesis in the catalytic domain of F(1) is coupled via a rotary mechanism of the central stalk subunits to proton translocation. Its function is as follows. Key component of the F(0) channel; it plays a direct role in translocation across the membrane. A homomeric c-ring of between 10-14 subunits forms the central stalk rotor element with the F(1) delta and epsilon subunits. The sequence is that of ATP synthase subunit c from Mesoplasma florum (strain ATCC 33453 / NBRC 100688 / NCTC 11704 / L1) (Acholeplasma florum).